We begin with the raw amino-acid sequence, 231 residues long: Sugar fermentation stimulation protein homolog (231 aa).

This sequence belongs to the SfsA family.

In Geotalea uraniireducens (strain Rf4) (Geobacter uraniireducens), this protein is Sugar fermentation stimulation protein homolog.